The sequence spans 392 residues: GTPase Obg (392 aa).

Residues 1-159 enclose the Obg domain; sequence MKFVDEATIL…RDLQLELMLL (159 aa). Positions 127 to 148 are disordered; the sequence is NSRFKSSVNRSPRQKTMGTPGD. Positions 129 to 143 are enriched in polar residues; it reads RFKSSVNRSPRQKTM. The OBG-type G domain occupies 160 to 333; sequence ADVGMLGMPN…LCWDVMAFII (174 aa). GTP is bound by residues 166–173, 191–195, 213–216, 283–286, and 314–316; these read GMPNAGKS, FTTLV, DIPG, NKID, and SAA. Residues Ser-173 and Thr-193 each coordinate Mg(2+). A compositionally biased stretch (acidic residues) spans 363-386; the sequence is EQEVEVEDDEEWDEDWDEDDEEGV. Residues 363–392 are disordered; sequence EQEVEVEDDEEWDEDWDEDDEEGVEFIYKR.

It belongs to the TRAFAC class OBG-HflX-like GTPase superfamily. OBG GTPase family. In terms of assembly, monomer. It depends on Mg(2+) as a cofactor.

It is found in the cytoplasm. Its function is as follows. An essential GTPase which binds GTP, GDP and possibly (p)ppGpp with moderate affinity, with high nucleotide exchange rates and a fairly low GTP hydrolysis rate. Plays a role in control of the cell cycle, stress response, ribosome biogenesis and in those bacteria that undergo differentiation, in morphogenesis control. This chain is GTPase Obg, found in Enterobacter sp. (strain 638).